We begin with the raw amino-acid sequence, 221 residues long: Ribosomal RNA small subunit methyltransferase Nep1 (221 aa).

S-adenosyl-L-methionine is bound by residues Gly174, Gly179, and 196-201 (VGDEPL).

It belongs to the class IV-like SAM-binding methyltransferase superfamily. RNA methyltransferase NEP1 family. In terms of assembly, homodimer.

The catalysed reaction is a pseudouridine in rRNA + S-adenosyl-L-methionine = an N(1)-methylpseudouridine in rRNA + S-adenosyl-L-homocysteine + H(+). In terms of biological role, methyltransferase involved in ribosomal biogenesis. Specifically catalyzes the N1-methylation of the pseudouridine corresponding to position 914 in M.jannaschii 16S rRNA. The protein is Ribosomal RNA small subunit methyltransferase Nep1 of Pyrobaculum neutrophilum (strain DSM 2338 / JCM 9278 / NBRC 100436 / V24Sta) (Thermoproteus neutrophilus).